The chain runs to 348 residues: tRNA N6-adenosine threonylcarbamoyltransferase (348 aa).

Fe cation-binding residues include His-111 and His-115. Substrate is bound by residues 134 to 138 (LVSGG), Asp-167, Gly-180, Asp-184, and Asn-279. Asp-307 serves as a coordination point for Fe cation.

It belongs to the KAE1 / TsaD family. Fe(2+) serves as cofactor.

The protein localises to the cytoplasm. The catalysed reaction is L-threonylcarbamoyladenylate + adenosine(37) in tRNA = N(6)-L-threonylcarbamoyladenosine(37) in tRNA + AMP + H(+). Functionally, required for the formation of a threonylcarbamoyl group on adenosine at position 37 (t(6)A37) in tRNAs that read codons beginning with adenine. Is involved in the transfer of the threonylcarbamoyl moiety of threonylcarbamoyl-AMP (TC-AMP) to the N6 group of A37, together with TsaE and TsaB. TsaD likely plays a direct catalytic role in this reaction. The protein is tRNA N6-adenosine threonylcarbamoyltransferase of Synechocystis sp. (strain ATCC 27184 / PCC 6803 / Kazusa).